A 68-amino-acid chain; its full sequence is Large ribosomal subunit protein uL29 (68 aa).

This sequence belongs to the universal ribosomal protein uL29 family.

The polypeptide is Large ribosomal subunit protein uL29 (Chlorobaculum parvum (strain DSM 263 / NCIMB 8327) (Chlorobium vibrioforme subsp. thiosulfatophilum)).